The following is a 159-amino-acid chain: Neuroglobin-2 (159 aa).

Positions 3-151 constitute a Globin domain; it reads KLTEKDKELI…VVAAMSRGWA (149 aa). Heme b is bound by residues His-66 and His-98.

It belongs to the globin family. As to quaternary structure, monomer. Homodimers and homotetramers. Mainly monomeric but also detected as part of homodimers and homotetramers.

The protein localises to the cytoplasm. The protein resides in the cytosol. It is found in the mitochondrion matrix. The catalysed reaction is Fe(III)-heme b-[protein] + nitric oxide + H2O = Fe(II)-heme b-[protein] + nitrite + 2 H(+). In terms of biological role, monomeric globin with a bis-histidyl six-coordinate heme-iron atom through which it can bind dioxygen, carbon monoxide and nitric oxide. Could help transport oxygen and increase its availability to the metabolically active neuronal tissues, though its low quantity in tissues as well as its high affinity for dioxygen, which may limit its oxygen-releasing ability, argue against it. The ferrous/deoxygenated form exhibits a nitrite reductase activity and it could produce nitric oxide which in turn inhibits cellular respiration in response to hypoxia. In its ferrous/deoxygenated state, it may also exhibit GDI (Guanine nucleotide Dissociation Inhibitor) activity toward heterotrimeric G-alpha proteins, thereby regulating signal transduction to facilitate neuroprotective responses in the wake of hypoxia and associated oxidative stress. The sequence is that of Neuroglobin-2 (ngb2) from Oncorhynchus mykiss (Rainbow trout).